A 141-amino-acid polypeptide reads, in one-letter code: Protein MGF 100-2L (141 aa).

The protein belongs to the asfivirus MGF 100 family.

In terms of biological role, plays a role in virus cell tropism, and may be required for efficient virus replication in macrophages. This African swine fever virus (isolate Tick/Malawi/Lil 20-1/1983) (ASFV) protein is Protein MGF 100-2L.